The chain runs to 90 residues: Putative membrane protein insertion efficiency factor (90 aa).

Belongs to the UPF0161 family.

The protein localises to the cell inner membrane. In terms of biological role, could be involved in insertion of integral membrane proteins into the membrane. The protein is Putative membrane protein insertion efficiency factor of Bordetella bronchiseptica (strain ATCC BAA-588 / NCTC 13252 / RB50) (Alcaligenes bronchisepticus).